The following is a 62-amino-acid chain: UPF0434 protein azo1471 (62 aa).

The protein belongs to the UPF0434 family.

This Azoarcus sp. (strain BH72) protein is UPF0434 protein azo1471.